The chain runs to 169 residues: Cytochrome c-type biogenesis protein CcmE (169 aa).

Topologically, residues 1–7 (MTRKQRR) are cytoplasmic. The chain crosses the membrane as a helical; Signal-anchor for type II membrane protein span at residues 8-28 (MTIIGGSLAVLALAAALVLNA). Residues 29–169 (LRDSIVFFST…AQGNPQGAVR (141 aa)) lie on the Periplasmic side of the membrane. Heme contacts are provided by H122 and Y126. A disordered region spans residues 143–169 (DDYGGKASDGVKPAATTAQGNPQGAVR). The segment covering 158–169 (TTAQGNPQGAVR) has biased composition (polar residues).

The protein belongs to the CcmE/CycJ family.

It localises to the cell inner membrane. Its function is as follows. Heme chaperone required for the biogenesis of c-type cytochromes. Transiently binds heme delivered by CcmC and transfers the heme to apo-cytochromes in a process facilitated by CcmF and CcmH. The protein is Cytochrome c-type biogenesis protein CcmE of Bradyrhizobium diazoefficiens (strain JCM 10833 / BCRC 13528 / IAM 13628 / NBRC 14792 / USDA 110).